The chain runs to 562 residues: ATP-dependent RNA helicase dbp2 (562 aa).

Positions glutamate 132–serine 160 match the Q motif motif. In terms of domain architecture, Helicase ATP-binding spans tryptophan 163–valine 338. Alanine 176–threonine 183 contacts ATP. The short motif at aspartate 286–aspartate 289 is the DEAD box element. Residues histidine 370–alanine 515 form the Helicase C-terminal domain. Residues glycine 526–serine 548 form an RNA-binding RGG-box region. The span at tryptophan 536–glycine 550 shows a compositional bias: gly residues. The disordered stretch occupies residues tryptophan 536 to tryptophan 562.

Belongs to the DEAD box helicase family. DDX5/DBP2 subfamily. Associates with polysomes.

Its subcellular location is the cytoplasm. It is found in the nucleus. The enzyme catalyses ATP + H2O = ADP + phosphate + H(+). ATP-dependent RNA helicase involved nonsense-mediated mRNA decay and ribosome biogenesis through rRNA processing. The chain is ATP-dependent RNA helicase dbp2 (drh-1) from Neurospora crassa (strain ATCC 24698 / 74-OR23-1A / CBS 708.71 / DSM 1257 / FGSC 987).